Here is a 304-residue protein sequence, read N- to C-terminus: Serine/threonine-protein phosphatase PP1 isozyme 3 (304 aa).

Mn(2+) is bound by residues D61, H63, D89, and N121. Catalysis depends on H122, which acts as the Proton donor. Residues H170 and H245 each contribute to the Mn(2+) site.

It belongs to the PPP phosphatase family. PP-1 subfamily. Mn(2+) is required as a cofactor.

The catalysed reaction is O-phospho-L-seryl-[protein] + H2O = L-seryl-[protein] + phosphate. The enzyme catalyses O-phospho-L-threonyl-[protein] + H2O = L-threonyl-[protein] + phosphate. The polypeptide is Serine/threonine-protein phosphatase PP1 isozyme 3 (NPP3) (Nicotiana tabacum (Common tobacco)).